A 128-amino-acid chain; its full sequence is Nanos homolog 1 (128 aa).

Positions Phe7–Gly23 are essential for its translational repressor activity. A disordered region spans residues Gly23–Arg56. Residues Gly60–Leu114 form a Nanos-type zinc finger. Cys61, Cys64, His77, Cys88, Cys96, Cys99, His107, and Cys112 together coordinate Zn(2+). Short sequence motifs (C2HC) lie at residues Cys61–Cys88 and Cys96–Cys112.

This sequence belongs to the nanos family. In terms of assembly, interacts with ccnb1.

Its subcellular location is the cytoplasm. The protein resides in the perinuclear region. Acts as a translational repressor. Can mediate repression affecting different steps in the translation process: cap-driven, IRES-driven, polyadenylated RNAs or nonpolyadenylated RNAs. Essential for the development of primordial germ cells (PGCs) by ensuring their proper migration and survival. The polypeptide is Nanos homolog 1 (nanos1) (Xenopus borealis (Kenyan clawed frog)).